Reading from the N-terminus, the 745-residue chain is Heterogeneous nuclear ribonucleoprotein U-like protein 2 (745 aa).

In terms of domain architecture, SAP spans 3–37; it reads VKRLKVTELRSELQRRGLDSRGLKMDLAQRLQEAL. Disordered stretches follow at residues 44-239 and 625-664; these read DEAG…DEEE and EEARKLLPPSEKRTNRRNNRNKRNRQNRSRGQGYVGGQRR. The segment covering 73–97 has biased composition (acidic residues); that stretch reads GDEEEEDDDEEEDEEALLEDEDEEP. Basic and acidic residues predominate over residues 142–161; that stretch reads GEEHDNGKGEEDGPEERSGD. Ser-159 bears the Phosphoserine mark. Thr-163 is modified (phosphothreonine). 5 positions are modified to phosphoserine: Ser-166, Ser-183, Ser-186, Ser-224, and Ser-226. A compositionally biased stretch (basic and acidic residues) spans 183-221; that stretch reads SEKSKPAGSDGERRGVKRQRDEKDEHGRAYYEFREEAYH. The B30.2/SPRY domain maps to 224 to 417; the sequence is SKSPPPPEEE…VELNFGQKEE (194 aa). Acidic residues predominate over residues 230 to 239; the sequence is PEEEAKDEEE. Residues 625 to 637 show a composition bias toward basic and acidic residues; sequence EEARKLLPPSEKR. Positions 638–652 are enriched in basic residues; it reads TNRRNNRNKRNRQNR. 4 positions are modified to omega-N-methylarginine: Arg-654, Arg-682, Arg-736, and Arg-745.

In terms of assembly, binds to MLF1 and retains it in the nucleus.

Its subcellular location is the nucleus. The protein is Heterogeneous nuclear ribonucleoprotein U-like protein 2 (Hnrnpul2) of Mus musculus (Mouse).